We begin with the raw amino-acid sequence, 261 residues long: Thiazole synthase (261 aa).

Lys-102 functions as the Schiff-base intermediate with DXP in the catalytic mechanism. 1-deoxy-D-xylulose 5-phosphate contacts are provided by residues Gly-163, 189–190 (AG), and 211–212 (NT).

Belongs to the ThiG family. Homotetramer. Forms heterodimers with either ThiH or ThiS.

It localises to the cytoplasm. The enzyme catalyses [ThiS sulfur-carrier protein]-C-terminal-Gly-aminoethanethioate + 2-iminoacetate + 1-deoxy-D-xylulose 5-phosphate = [ThiS sulfur-carrier protein]-C-terminal Gly-Gly + 2-[(2R,5Z)-2-carboxy-4-methylthiazol-5(2H)-ylidene]ethyl phosphate + 2 H2O + H(+). It functions in the pathway cofactor biosynthesis; thiamine diphosphate biosynthesis. Catalyzes the rearrangement of 1-deoxy-D-xylulose 5-phosphate (DXP) to produce the thiazole phosphate moiety of thiamine. Sulfur is provided by the thiocarboxylate moiety of the carrier protein ThiS. In vitro, sulfur can be provided by H(2)S. In Acinetobacter baylyi (strain ATCC 33305 / BD413 / ADP1), this protein is Thiazole synthase.